A 745-amino-acid polypeptide reads, in one-letter code: VCP-like ATPase (745 aa).

ATP contacts are provided by residues 231–238 and 508–515; these read GPPGTGKT and GPPGVGKT.

This sequence belongs to the AAA ATPase family. CDC48 subfamily. In terms of assembly, homohexamer. Forms a ring-shaped particle.

This is VCP-like ATPase (vat) from Thermoplasma acidophilum (strain ATCC 25905 / DSM 1728 / JCM 9062 / NBRC 15155 / AMRC-C165).